The primary structure comprises 300 residues: Ribosomal protein L11 methyltransferase (300 aa).

The S-adenosyl-L-methionine site is built by threonine 152, glycine 173, aspartate 195, and asparagine 234.

This sequence belongs to the methyltransferase superfamily. PrmA family.

The protein localises to the cytoplasm. It carries out the reaction L-lysyl-[protein] + 3 S-adenosyl-L-methionine = N(6),N(6),N(6)-trimethyl-L-lysyl-[protein] + 3 S-adenosyl-L-homocysteine + 3 H(+). Its function is as follows. Methylates ribosomal protein L11. In Paraburkholderia phymatum (strain DSM 17167 / CIP 108236 / LMG 21445 / STM815) (Burkholderia phymatum), this protein is Ribosomal protein L11 methyltransferase.